A 424-amino-acid polypeptide reads, in one-letter code: Tyrosine--tRNA ligase (424 aa).

Tyrosine 37 is an L-tyrosine binding site. The 'HIGH' region signature appears at 42 to 51 (PTADSLHLGH). L-tyrosine-binding residues include tyrosine 175 and glutamine 179. A 'KMSKS' region motif is present at residues 235-239 (KFGKT). Lysine 238 contacts ATP. Residues 357–414 (ADLQQALVAAELVPSRGQARTLISSNAVSVNGEKQASIDYVFDDADRLYSRYTLLRRG) form the S4 RNA-binding domain.

Belongs to the class-I aminoacyl-tRNA synthetase family. TyrS type 1 subfamily. Homodimer.

The protein resides in the cytoplasm. It catalyses the reaction tRNA(Tyr) + L-tyrosine + ATP = L-tyrosyl-tRNA(Tyr) + AMP + diphosphate + H(+). In terms of biological role, catalyzes the attachment of tyrosine to tRNA(Tyr) in a two-step reaction: tyrosine is first activated by ATP to form Tyr-AMP and then transferred to the acceptor end of tRNA(Tyr). The polypeptide is Tyrosine--tRNA ligase (Sodalis glossinidius (strain morsitans)).